The sequence spans 812 residues: Phenylalanine--tRNA ligase beta subunit (812 aa).

The region spanning 39–155 (SKTFAPFTIA…ADAPVGAGYA (117 aa)) is the tRNA-binding domain. A B5 domain is found at 405–480 (PEDRVIDFPL…RIVGVDKVPM (76 aa)). The Mg(2+) site is built by D458, D464, E467, and E468. The region spanning 718–811 (PAFQPVSRDF…VAKRTGGSLR (94 aa)) is the FDX-ACB domain.

It belongs to the phenylalanyl-tRNA synthetase beta subunit family. Type 1 subfamily. As to quaternary structure, tetramer of two alpha and two beta subunits. The cofactor is Mg(2+).

It localises to the cytoplasm. The catalysed reaction is tRNA(Phe) + L-phenylalanine + ATP = L-phenylalanyl-tRNA(Phe) + AMP + diphosphate + H(+). The sequence is that of Phenylalanine--tRNA ligase beta subunit from Nitrobacter winogradskyi (strain ATCC 25391 / DSM 10237 / CIP 104748 / NCIMB 11846 / Nb-255).